Here is a 480-residue protein sequence, read N- to C-terminus: Voltage-gated potassium channel regulatory subunit KCNG2 (480 aa).

2 disordered regions span residues 1-25 (MARLPGHPEVPGAEPGSAVRGGRGG) and 144-167 (AAEARATPPARGPQTSPGRALGSG). Over 1-187 (MARLPGHPEV…DVVENPHSGL (187 aa)) the chain is Cytoplasmic. Residues 188–209 (AGKLFAYVSVAFVAVTAVGLCL) form a helical membrane-spanning segment. The Extracellular portion of the chain corresponds to 210-230 (STMPDVRAEEERGECSTKCRN). Residues 231 to 252 (LFVLETVCVAWFSFEFLLRSLQ) traverse the membrane as a helical segment. Residues 253–263 (AESKCAFLRTP) lie on the Cytoplasmic side of the membrane. A helical membrane pass occupies residues 264–284 (LAIIDILAILPFYVSLLAGLA). Residues 285–296 (AGPTGSKMLERA) are Extracellular-facing. The chain crosses the membrane as a helical; Voltage-sensor span at residues 297-317 (GLVLRLLRALRVLYVMRLARH). Residues 318-332 (SLGLRSLGLTVRRCA) are Cytoplasmic-facing. A helical transmembrane segment spans residues 333–354 (REFGLLLLFLCVAMALFAPLVH). The Extracellular portion of the chain corresponds to 355-369 (LAERELGAHRDFSSV). Residues 370-381 (PASYWWAVISMT) constitute an intramembrane region (helical). The Selectivity filter signature appears at 382 to 387 (TVGYGD). The stretch at 382-389 (TVGYGDMV) is an intramembrane region. Residues 390 to 396 (PRSLPGQ) lie on the Extracellular side of the membrane. A helical transmembrane segment spans residues 397–425 (VVALSSILSGILLMAFPVTSIFHTFSRSY). The Cytoplasmic segment spans residues 426–480 (SELKEQQQRAASPEPVLREDSTRDDSTRSASATEDSSQDPETAGAAGSLPGPVGP). The interval 429-480 (KEQQQRAASPEPVLREDSTRDDSTRSASATEDSSQDPETAGAAGSLPGPVGP) is disordered. The segment covering 441-452 (VLREDSTRDDST) has biased composition (basic and acidic residues).

It belongs to the potassium channel family. G (TC 1.A.1.2) subfamily. Kv6.2/KCNG2 sub-subfamily. As to quaternary structure, heterodimer with KCNB1. In terms of tissue distribution, highly expressed in heart, in particular in right and left atrium, and detected at lower levels in the right and left ventricle.

It is found in the cell membrane. Its function is as follows. Regulatory alpha-subunit of the voltage-gated potassium (Kv) channel which, when coassembled with KCNB1, can modulate the kinetics and conductance-voltage relationship. Modulates channel activity by shifting the threshold and the half-maximal activation to more negative values. Potassium channel subunit that does not form functional channels by itself. This chain is Voltage-gated potassium channel regulatory subunit KCNG2, found in Rattus norvegicus (Rat).